Reading from the N-terminus, the 547-residue chain is Cytochrome P450 monooxygenase 128 (547 aa).

Residues 9–25 (IPWAAGATLLAWAAYKI) traverse the membrane as a helical segment. N-linked (GlcNAc...) asparagine glycans are attached at residues N336 and N438. C483 is a binding site for heme.

This sequence belongs to the cytochrome P450 family. Heme is required as a cofactor.

The protein resides in the membrane. The protein operates within secondary metabolite biosynthesis. In terms of biological role, cytochrome P450 monooxygenase that is able to use 7-ethoxycoumarin and testosterone as substrates for oxidation. The protein is Cytochrome P450 monooxygenase 128 of Postia placenta (strain ATCC 44394 / Madison 698-R) (Brown rot fungus).